The sequence spans 746 residues: NAD(P)H-quinone oxidoreductase subunit 5, chloroplastic (746 aa).

16 helical membrane-spanning segments follow: residues 9–29, 40–60, 89–109, 125–145, 147–167, 185–205, 221–241, 258–278, 280–300, 327–347, 354–374, 396–416, 425–445, 547–567, 608–628, and 723–743; these read WIIP…LLLF, WTFL…YLSI, IDPL…LVLI, FAYM…SNLI, VYFF…FWFT, GDFG…SFEF, VNFL…IAKS, TPIS…FLVA, LLPL…IGII, LGYM…FHLI, ALLF…VGYS, TAFL…CFWS, LLFS…TAFY, ILFP…IGIP, FSVS…KPFY, and YLFL…FFYF.

This sequence belongs to the complex I subunit 5 family. In terms of assembly, NDH is composed of at least 16 different subunits, 5 of which are encoded in the nucleus.

The protein resides in the plastid. It is found in the chloroplast thylakoid membrane. It carries out the reaction a plastoquinone + NADH + (n+1) H(+)(in) = a plastoquinol + NAD(+) + n H(+)(out). The enzyme catalyses a plastoquinone + NADPH + (n+1) H(+)(in) = a plastoquinol + NADP(+) + n H(+)(out). NDH shuttles electrons from NAD(P)H:plastoquinone, via FMN and iron-sulfur (Fe-S) centers, to quinones in the photosynthetic chain and possibly in a chloroplast respiratory chain. The immediate electron acceptor for the enzyme in this species is believed to be plastoquinone. Couples the redox reaction to proton translocation, and thus conserves the redox energy in a proton gradient. This chain is NAD(P)H-quinone oxidoreductase subunit 5, chloroplastic (ndhF), found in Barbarea verna (Land cress).